Consider the following 475-residue polypeptide: 1-aminocyclopropane-1-carboxylate synthase CMA101 (475 aa).

The residue at position 272 (Lys-272) is an N6-(pyridoxal phosphate)lysine.

This sequence belongs to the class-I pyridoxal-phosphate-dependent aminotransferase family. Homodimer. It depends on pyridoxal 5'-phosphate as a cofactor.

It carries out the reaction S-adenosyl-L-methionine = 1-aminocyclopropane-1-carboxylate + S-methyl-5'-thioadenosine + H(+). The protein operates within alkene biosynthesis; ethylene biosynthesis via S-adenosyl-L-methionine; ethylene from S-adenosyl-L-methionine: step 1/2. In terms of biological role, catalyzes the formation of 1-aminocyclopropane-1-carboxylate, a direct precursor of ethylene in higher plants. The polypeptide is 1-aminocyclopropane-1-carboxylate synthase CMA101 (ACS2) (Cucurbita maxima (Pumpkin)).